Reading from the N-terminus, the 86-residue chain is UPF0335 protein BR1752/BS1330_I1746 (86 aa).

This sequence belongs to the UPF0335 family.

This chain is UPF0335 protein BR1752/BS1330_I1746, found in Brucella suis biovar 1 (strain 1330).